An 838-amino-acid chain; its full sequence is Extragenic suppressor of kinetochore protein 1 (838 aa).

A phosphoserine mark is found at Ser411 and Ser418. The segment at 411-468 is disordered; sequence SDEDDDDSTFSDKNSKDFKETEDMNGAEDMHGRAPQITKDNLNLTTTDSPMSEAEPVS. Thr419 bears the Phosphothreonine mark. Over residues 423–442 the composition is skewed to basic and acidic residues; the sequence is KNSKDFKETEDMNGAEDMHG. A phosphoserine mark is found at Ser425, Ser459, Ser468, and Ser491. A compositionally biased stretch (polar residues) spans 448-460; sequence TKDNLNLTTTDSP. The residue at position 493 (Thr493) is a Phosphothreonine. At Ser494 the chain carries Phosphoserine. The span at 690-700 shows a compositional bias: acidic residues; sequence ELESNSSDDDV. 2 disordered regions span residues 690 to 745 and 757 to 838; these read ELES…DQDN and ISDN…NHGK. 2 positions are modified to phosphoserine: Ser711 and Ser713. A compositionally biased stretch (acidic residues) spans 714-723; it reads NDEDDGNDED. The span at 724-734 shows a compositional bias: basic and acidic residues; it reads PLSREMSRRLS. Composition is skewed to acidic residues over residues 768–779 and 806–818; these read SDEDDDDDDEVV and SDSE…DSSD.

The protein belongs to the SAPS family. In terms of assembly, interacts with ppe1 and mis12.

The protein localises to the nucleus. Functionally, has a role in chromosome segregation. May provide a dynamic connection between kinetochore microtubules and kinetochore chromatin. The sequence is that of Extragenic suppressor of kinetochore protein 1 (ekc1) from Schizosaccharomyces pombe (strain 972 / ATCC 24843) (Fission yeast).